Here is a 547-residue protein sequence, read N- to C-terminus: Threonine synthase (547 aa).

Lysine 117 is modified (N6-(pyridoxal phosphate)lysine). Positions 272, 273, 274, 276, and 471 each coordinate pyridoxal 5'-phosphate.

The protein belongs to the threonine synthase family. Pyridoxal 5'-phosphate is required as a cofactor.

The enzyme catalyses O-phospho-L-homoserine + H2O = L-threonine + phosphate. The protein operates within amino-acid biosynthesis; L-threonine biosynthesis; L-threonine from L-aspartate: step 5/5. In terms of biological role, catalyzes the gamma-elimination of phosphate from L-phosphohomoserine and the beta-addition of water to produce L-threonine. This Cryptococcus neoformans var. grubii serotype A (strain H99 / ATCC 208821 / CBS 10515 / FGSC 9487) (Filobasidiella neoformans var. grubii) protein is Threonine synthase.